The following is a 238-amino-acid chain: Tetraspanin-8 (238 aa).

At 1–9 (MAGVNVCIK) the chain is on the cytoplasmic side. Residues 10 to 33 (CSMFIFNFVFWLCGAIILSVAISI) traverse the membrane as a helical segment. At 34 to 57 (RAGKIGQEILAPGDADLNLFIAVN) the chain is on the extracellular side. A helical transmembrane segment spans residues 58 to 72 (ILIFVGAVIMILGFL). Over 73–83 (GCCGAMKENQF) the chain is Cytoplasmic. A helical membrane pass occupies residues 84–109 (MMILFFVGLLMILLLQVAAGIVATTR). The Extracellular segment spans residues 110-206 (KSKTEQALNK…ASISQMFSKR (97 aa)). N-linked (GlcNAc...) asparagine glycosylation is present at Asn-118. Residues 207 to 231 (LFIVLALAFGLAAIEVLGLIFSIVL) traverse the membrane as a helical segment. The Cytoplasmic segment spans residues 232–238 (YCQMRKK).

It belongs to the tetraspanin (TM4SF) family. As to quaternary structure, forms homooligomers. Interacts with MEP1B. Interacts with integrin alpha3/ITGA3. Interacts with RICTOR and MTOR. Interacts with ADAM17. Interacts with ECE1.

Its subcellular location is the cell membrane. In terms of biological role, structural component of specialized membrane microdomains known as tetraspanin-enriched microdomains (TERMs), which act as platforms for receptor clustering and signaling. Participates thereby in diverse biological functions such as cell signal transduction, migration and protein trafficking. Promotes ADAM17-mediated TNF-alpha processing through recruitment of ADAM17 to tetraspanin-enriched micro-domains (TEMs). Forms a complex with RICTOR and integrin alpha3/ITGA3 to mediate mTORC2 activation and AKT1 phosphorylation leading to cell migration. Reduces apoptosis and autophagy induced by high glucose levels through forming a complex with mTOR and RICTOR. Contributes to the maintenance of intestinal epithelial barrier and plays a role in the regulation of intestine inflammation by switching interferon gamma receptor 1/IFNGR1 from clathrin-dependent to lipid raft-dependent endocytosis route to limit STAT1 activation magnitude and duration. Acts as a modulator of the endothelin axis by associating with endothelin converting enzyme ECE1 and regulating its activity of conversion of the endothelin-1 precursor to endothelin. The protein is Tetraspanin-8 (TSPAN8) of Bos taurus (Bovine).